Reading from the N-terminus, the 339-residue chain is Store-operated calcium entry-associated regulatory factor (339 aa).

A signal peptide spans 1 to 30 (MAAACGPGAAGYCLLLGLHLFLLTAGPALG). The Lumenal segment spans residues 31–173 (WNDPDRMLLR…KWSSADSCNM (143 aa)). Residues 174–194 (SGLITIVVLLGIAFVVYKLFL) form a helical membrane-spanning segment. At 195-339 (SDGQYSPPPY…ASGYGGTRRR (145 aa)) the chain is on the cytoplasmic side. The segment covering 318–330 (SVCSNSDTKTRTA) has biased composition (polar residues). The interval 318 to 339 (SVCSNSDTKTRTASGYGGTRRR) is disordered.

This sequence belongs to the SARAF family. In terms of assembly, interacts with STIM1; the interaction is inhibited by the interaction of STIM1 with EFHB. In terms of tissue distribution, highly expressed in macrophages.

The protein resides in the endoplasmic reticulum membrane. Its function is as follows. Negative regulator of store-operated Ca(2+) entry (SOCE) involved in protecting cells from Ca(2+) overfilling. In response to cytosolic Ca(2+) elevation after endoplasmic reticulum Ca(2+) refilling, promotes a slow inactivation of STIM (STIM1 or STIM2)-dependent SOCE activity: possibly act by facilitating the deoligomerization of STIM to efficiently turn off ORAI when the endoplasmic reticulum lumen is filled with the appropriate Ca(2+) levels, and thus preventing the overload of the cell with excessive Ca(2+) ions. The polypeptide is Store-operated calcium entry-associated regulatory factor (SARAF) (Homo sapiens (Human)).